The following is a 415-amino-acid chain: Gamma-glutamyl phosphate reductase (415 aa).

It belongs to the gamma-glutamyl phosphate reductase family.

It localises to the cytoplasm. It catalyses the reaction L-glutamate 5-semialdehyde + phosphate + NADP(+) = L-glutamyl 5-phosphate + NADPH + H(+). It participates in amino-acid biosynthesis; L-proline biosynthesis; L-glutamate 5-semialdehyde from L-glutamate: step 2/2. Catalyzes the NADPH-dependent reduction of L-glutamate 5-phosphate into L-glutamate 5-semialdehyde and phosphate. The product spontaneously undergoes cyclization to form 1-pyrroline-5-carboxylate. The sequence is that of Gamma-glutamyl phosphate reductase from Listeria innocua serovar 6a (strain ATCC BAA-680 / CLIP 11262).